The following is a 475-amino-acid chain: ATP synthase subunit beta (475 aa).

Gly156 to Thr163 lines the ATP pocket.

This sequence belongs to the ATPase alpha/beta chains family. In terms of assembly, F-type ATPases have 2 components, CF(1) - the catalytic core - and CF(0) - the membrane proton channel. CF(1) has five subunits: alpha(3), beta(3), gamma(1), delta(1), epsilon(1). CF(0) has three main subunits: a(1), b(2) and c(9-12). The alpha and beta chains form an alternating ring which encloses part of the gamma chain. CF(1) is attached to CF(0) by a central stalk formed by the gamma and epsilon chains, while a peripheral stalk is formed by the delta and b chains.

The protein localises to the cell membrane. It carries out the reaction ATP + H2O + 4 H(+)(in) = ADP + phosphate + 5 H(+)(out). Its function is as follows. Produces ATP from ADP in the presence of a proton gradient across the membrane. The catalytic sites are hosted primarily by the beta subunits. This Mycoplasma pneumoniae (strain ATCC 29342 / M129 / Subtype 1) (Mycoplasmoides pneumoniae) protein is ATP synthase subunit beta.